The primary structure comprises 337 residues: Protein-arginine kinase (337 aa).

The Phosphagen kinase C-terminal domain occupies isoleucine 12–glutamine 240. Residues alanine 15–lysine 19, arginine 162–phenylalanine 166, and lysine 193–serine 198 contribute to the ATP site.

Belongs to the ATP:guanido phosphotransferase family.

The catalysed reaction is L-arginyl-[protein] + ATP = N(omega)-phospho-L-arginyl-[protein] + ADP + H(+). Its function is as follows. Catalyzes the specific phosphorylation of arginine residues in proteins. This is Protein-arginine kinase from Clostridium perfringens (strain ATCC 13124 / DSM 756 / JCM 1290 / NCIMB 6125 / NCTC 8237 / Type A).